The following is a 545-amino-acid chain: Capsular polysaccharide phosphotransferase SacB (545 aa).

Belongs to the stealth family.

May be the polymerase that links individual UDP-N-acetyl-D-mannosamine monomers. In serotype A the capsule is composed of repeated units of (alpha 1-6)-linked N-acetyl-D-mannosamine-1-phosphate. This Neisseria meningitidis serogroup A protein is Capsular polysaccharide phosphotransferase SacB (sacB).